The primary structure comprises 141 residues: Large ribosomal subunit protein bL17 (141 aa).

It belongs to the bacterial ribosomal protein bL17 family. In terms of assembly, part of the 50S ribosomal subunit. Contacts protein L32.

The protein is Large ribosomal subunit protein bL17 of Sinorhizobium medicae (strain WSM419) (Ensifer medicae).